A 270-amino-acid polypeptide reads, in one-letter code: MPVIEEIDDIDDIDNLEMDLAELDSTMKTPVAPKIVPTVVRSQDQEEEAYSAAISGNAGSGSGFNFVNSTTGQVEKSHSLTKEELDEIKEFQMLYPCYFDTRRTHAQGRRAPKDLCVENPLAKTIADAARSLGIPSIFEGSKTHPQDFGNPGRVRVLIKENGKPFVSGIDNKRVLMKRIGEYLKSHPTTLESVKQLPYGPDFDNVEPKKIPLLKGTAMNDIVPLHSPYLTQHPMTKSLYDAPPPPPPAQQVSAPEKQMKMPKNKFRVVRR.

The segment at 237 to 270 (SLYDAPPPPPPAQQVSAPEKQMKMPKNKFRVVRR) is disordered. Over residues 259–270 (KMPKNKFRVVRR) the composition is skewed to basic residues.

It belongs to the SRP19 family. In terms of assembly, fungal signal recognition particle consists of a 7S RNA molecule (scR1) and at least six protein subunits: SRP72, SRP68, SRP54, SEC65, SRP21 and SRP14.

The protein localises to the cytoplasm. Signal-recognition-particle assembly has a crucial role in targeting secretory proteins to the rough endoplasmic reticulum membrane. It must be involved intimately in the translocation of a wide variety of protein substrates. The polypeptide is Signal recognition particle SEC65 subunit (SEC65) (Kluyveromyces lactis (strain ATCC 8585 / CBS 2359 / DSM 70799 / NBRC 1267 / NRRL Y-1140 / WM37) (Yeast)).